A 1409-amino-acid chain; its full sequence is CRISPR-associated endonuclease Cas9 (1409 aa).

Residue Asp-31 is the For RuvC-like nuclease domain of the active site. Residues Asp-31, Glu-784, and Glu-788 each coordinate Mg(2+). An HNH Cas9-type domain is found at 792-949 (TNQGKSNSQQ…DKAGFIQRQL (158 aa)). His-868 serves as the catalytic Proton acceptor for HNH nuclease domain. His-1011 contributes to the Mg(2+) binding site. Residues 1121-1130 (EQNHGLDRGK) show a composition bias toward basic and acidic residues. A disordered region spans residues 1121-1151 (EQNHGLDRGKPKGLFNANLSSKPKPNSNENL). The span at 1137-1150 (ANLSSKPKPNSNEN) shows a compositional bias: polar residues.

It belongs to the CRISPR-associated protein Cas9 family. Subtype II-A subfamily. In terms of assembly, monomer. Binds crRNA and tracrRNA. Mg(2+) is required as a cofactor.

Its activity is regulated as follows. Only has nuclease activity when bound to both gRNAs (crRNA plus tracrRNA). In terms of biological role, CRISPR (clustered regularly interspaced short palindromic repeat) is an adaptive immune system that provides protection against mobile genetic elements (viruses, transposable elements and conjugative plasmids). CRISPR clusters contain spacers, sequences complementary to antecedent mobile elements, and target invading nucleic acids. CRISPR clusters are transcribed and processed into CRISPR RNA (crRNA). In type II CRISPR systems correct processing of pre-crRNA requires a trans-encoded small RNA (tracrRNA), endogenous ribonuclease 3 (rnc) and Cas9. The tracrRNA serves as a guide for ribonuclease 3-aided processing of pre-crRNA. Cas9/crRNA/tracrRNA endonucleolytically cleaves linear or circular dsDNA target complementary to the spacer yielding blunt ends; Cas9 is inactive in the absence of the 2 guide RNAs (gRNA). Cas9 recognizes a 3'-G-rich protospacer adjacent motif (PAM, TGGTG in this organism) in the CRISPR repeat sequences to help distinguish self versus nonself, as targets within the bacterial CRISPR locus do not have PAMs. PAM recognition is also required for catalytic activity. When the CRISPR3/cas system consisting of cas9-cas1-cas2-csn2-CRISPR3 or just cas9-CRISPR3 is expressed in E.coli it prevents plasmids homologous to spacers 1 or 2 from transforming. In Streptococcus thermophilus, this protein is CRISPR-associated endonuclease Cas9.